The following is a 152-amino-acid chain: uncharacterized protein (152 aa).

Residues Glu3–Ser143 form the HTH marR-type domain. Positions Pro55–Glu78 form a DNA-binding region, H-T-H motif.

This is an uncharacterized protein from Bacillus subtilis (strain 168).